A 166-amino-acid polypeptide reads, in one-letter code: MWTLALGGIFLAAVEACVFCRFPDRELSGRLARLCSQMEVQWKDCEVSWTFSAFALDDASLNKITEKTHRVLRVMEIKGSLYSLPSYWQWLRKTKLREYNREALCPPSCRGSTILYNCSTCQGFEVYCWPRKRCFPGSHDLWEARILLLFVCGTALLLGVPSLAVE.

Residues 1–16 (MWTLALGGIFLAAVEA) form the signal peptide. 4 cysteine pairs are disulfide-bonded: cysteine 17/cysteine 118, cysteine 20/cysteine 121, cysteine 105/cysteine 128, and cysteine 109/cysteine 134. At 17–145 (CVFCRFPDRE…PGSHDLWEAR (129 aa)) the chain is on the extracellular side. N-linked (GlcNAc...) asparagine glycosylation occurs at asparagine 117. A helical transmembrane segment spans residues 146-165 (ILLLFVCGTALLLGVPSLAV). Residue glutamate 166 is a topological domain, cytoplasmic.

It belongs to the TMEM95 family. As to quaternary structure, does not interact with sperm-egg fusion proteins IZUMO1 or IZUMO1R/JUNO. Post-translationally, N-glycosylated. Detected in testis and brain with higher levels in brain than testis.

The protein localises to the cytoplasmic vesicle. The protein resides in the secretory vesicle. It is found in the acrosome membrane. Its function is as follows. Sperm protein required for fusion of sperm with the egg membrane during fertilization. The chain is Sperm-egg fusion protein TMEM95 from Bos taurus (Bovine).